A 64-amino-acid chain; its full sequence is Prokaryotic ubiquitin-like protein Pup (64 aa).

The disordered stretch occupies residues 1–37 (MAQEQTKRGGGGGEDDDLTGSTAAGQERREKLTDETD). The interval 21–58 (STAAGQERREKLTDETDDLLDEIDDVLEENAEDFVRAY) is ARC ATPase binding. The stretch at 23-52 (AAGQERREKLTDETDDLLDEIDDVLEENAE) forms a coiled coil. Gln-64 is modified (deamidated glutamine). Gln-64 participates in a covalent cross-link: Isoglutamyl lysine isopeptide (Gln-Lys) (interchain with K-? in acceptor proteins).

Belongs to the prokaryotic ubiquitin-like protein family. In terms of assembly, strongly interacts with the proteasome-associated ATPase ARC through a hydrophobic interface; the interacting region of Pup lies in its C-terminal half. There is one Pup binding site per ARC hexamer ring. In terms of processing, is modified by deamidation of its C-terminal glutamine to glutamate by the deamidase Dop, a prerequisite to the subsequent pupylation process.

The protein operates within protein degradation; proteasomal Pup-dependent pathway. Functionally, protein modifier that is covalently attached to lysine residues of substrate proteins, thereby targeting them for proteasomal degradation. The tagging system is termed pupylation. In Mycolicibacterium vanbaalenii (strain DSM 7251 / JCM 13017 / BCRC 16820 / KCTC 9966 / NRRL B-24157 / PYR-1) (Mycobacterium vanbaalenii), this protein is Prokaryotic ubiquitin-like protein Pup.